The chain runs to 625 residues: Probable potassium transport system protein Kup (625 aa).

12 consecutive transmembrane segments (helical) span residues 13-33 (TALA…LYAL), 53-73 (ILSI…VAIV), 103-123 (IYMI…GIIT), 141-161 (VFDP…FLVQ), 172-192 (FGPI…HSVI), 206-226 (AIQF…AVVL), 250-270 (WFFV…ALLL), 282-302 (LLVP…ATVI), 340-360 (IYVP…ILIF), 369-389 (AYGL…AVFI), 400-420 (VLLL…ATSL), and 422-442 (ILSG…ILMT).

The protein belongs to the HAK/KUP transporter (TC 2.A.72) family.

It is found in the cell inner membrane. It catalyses the reaction K(+)(in) + H(+)(in) = K(+)(out) + H(+)(out). Transport of potassium into the cell. Likely operates as a K(+):H(+) symporter. The sequence is that of Probable potassium transport system protein Kup from Acinetobacter baumannii (strain ACICU).